Reading from the N-terminus, the 131-residue chain is Small ribosomal subunit protein bS6 (131 aa).

Residues 98-131 form a disordered region; sequence EASPMVKAKDERRERRDDFANETADDSDAGDSEE. Positions 104-116 are enriched in basic and acidic residues; the sequence is KAKDERRERRDDF. The segment covering 120–131 has biased composition (acidic residues); it reads TADDSDAGDSEE.

Belongs to the bacterial ribosomal protein bS6 family.

In terms of biological role, binds together with bS18 to 16S ribosomal RNA. In Enterobacter sp. (strain 638), this protein is Small ribosomal subunit protein bS6.